Here is a 259-residue protein sequence, read N- to C-terminus: Small ribosomal subunit protein uS7m (259 aa).

A mitochondrion-targeting transit peptide spans 1–39 (MLRLIKQPLFRCASSGHLMKESLVFIHQTRTFQVGKFTS). At Thr-157 the chain carries Phosphothreonine.

Belongs to the universal ribosomal protein uS7 family. As to quaternary structure, component of the mitochondrial small ribosomal subunit (mt-SSU). Mature yeast 74S mitochondrial ribosomes consist of a small (37S) and a large (54S) subunit. The 37S small subunit contains a 15S ribosomal RNA (15S mt-rRNA) and at least 32 different proteins. The 54S large subunit contains a 21S rRNA (21S mt-rRNA) and at least 45 different proteins.

It is found in the mitochondrion. Functionally, component of the mitochondrial ribosome (mitoribosome), a dedicated translation machinery responsible for the synthesis of mitochondrial genome-encoded proteins, including at least some of the essential transmembrane subunits of the mitochondrial respiratory chain. The mitoribosomes are attached to the mitochondrial inner membrane and translation products are cotranslationally integrated into the membrane. In Schizosaccharomyces pombe (strain 972 / ATCC 24843) (Fission yeast), this protein is Small ribosomal subunit protein uS7m (rsm7).